A 292-amino-acid polypeptide reads, in one-letter code: MSQDVNELSKQPTPDKAEDNAFFPSPYSLSQYTAPKTDFDGVEHKGAYKDGKWKVLMIAAEERYVLLENGKMFSTGNHPVEMLLPLHHLMEAGFDVDVATLSGYPVKLELWAMPTEDEAVISTYNKLKEKLKQPKKLADVIKNELGPDSDYLSVFIPGGHAAVVGISESEDVQQTLDWALDNDRFIVTLCHGPAALLSAGLNREKSTLEGYSVCVFPDSLDEGANIEIGYLPGRLKWLVADLLTKQGLKVVNDDMTGRTLKDRKLLTGDSPLASNELGKLAVNEMLNAIQNK.

A compositionally biased stretch (polar residues) spans 1-12 (MSQDVNELSKQP). The segment at 1–23 (MSQDVNELSKQPTPDKAEDNAFF) is disordered. The active-site Nucleophile is the cysteine 190.

It belongs to the peptidase C56 family. HchA subfamily.

The protein resides in the cytoplasm. It carries out the reaction N(omega)-(1-hydroxy-2-oxopropyl)-L-arginyl-[protein] + H2O = lactate + L-arginyl-[protein] + H(+). The catalysed reaction is N(6)-(1-hydroxy-2-oxopropyl)-L-lysyl-[protein] + H2O = lactate + L-lysyl-[protein] + H(+). The enzyme catalyses S-(1-hydroxy-2-oxopropyl)-L-cysteinyl-[protein] + H2O = lactate + L-cysteinyl-[protein] + H(+). It catalyses the reaction N(omega)-(1-hydroxy-2-oxoethyl)-L-arginyl-[protein] + H2O = L-arginyl-[protein] + glycolate + H(+). It carries out the reaction N(6)-(1-hydroxy-2-oxoethyl)-L-lysyl-[protein] + H2O = glycolate + L-lysyl-[protein] + H(+). The catalysed reaction is S-(1-hydroxy-2-oxoethyl)-L-cysteinyl-[protein] + H2O = glycolate + L-cysteinyl-[protein] + H(+). The enzyme catalyses N(2)-(1-hydroxy-2-oxopropyl)-dGTP + H2O = lactate + dGTP + H(+). It catalyses the reaction N(2)-(1-hydroxy-2-oxopropyl)-GTP + H2O = lactate + GTP + H(+). It carries out the reaction N(2)-(1-hydroxy-2-oxopropyl)-GDP + H2O = lactate + GDP + H(+). The catalysed reaction is N(2)-(1-hydroxy-2-oxopropyl)-GMP + H2O = lactate + GMP + H(+). The enzyme catalyses N(2)-(1-hydroxy-2-oxoethyl)-dGTP + H2O = dGTP + glycolate + H(+). It catalyses the reaction N(2)-(1-hydroxy-2-oxoethyl)-GTP + H2O = glycolate + GTP + H(+). It carries out the reaction N(2)-(1-hydroxy-2-oxoethyl)-GDP + H2O = glycolate + GDP + H(+). The catalysed reaction is N(2)-(1-hydroxy-2-oxoethyl)-GMP + H2O = glycolate + GMP + H(+). The enzyme catalyses an N(2)-(1-hydroxy-2-oxopropyl)-guanosine in RNA + H2O = a guanosine in RNA + lactate + H(+). It catalyses the reaction an N(2)-(1-hydroxy-2-oxopropyl)-2'-deoxyguanosine in DNA + H2O = a 2'-deoxyguanosine in DNA + lactate + H(+). It carries out the reaction an N(2)-(1-hydroxy-2-oxoethyl)-guanosine in RNA + H2O = a guanosine in RNA + glycolate + H(+). The catalysed reaction is an N(2)-(1-hydroxy-2-oxoethyl)-2'-deoxyguanosine in DNA + H2O = a 2'-deoxyguanosine in DNA + glycolate + H(+). Functionally, protein and nucleotide deglycase that catalyzes the deglycation of the Maillard adducts formed between amino groups of proteins or nucleotides and reactive carbonyl groups of glyoxals. Thus, functions as a protein deglycase that repairs methylglyoxal- and glyoxal-glycated proteins, and releases repaired proteins and lactate or glycolate, respectively. Deglycates cysteine, arginine and lysine residues in proteins, and thus reactivates these proteins by reversing glycation by glyoxals. Acts on early glycation intermediates (hemithioacetals and aminocarbinols), preventing the formation of Schiff bases and advanced glycation endproducts (AGE). Also functions as a nucleotide deglycase able to repair glycated guanine in the free nucleotide pool (GTP, GDP, GMP, dGTP) and in DNA and RNA. Is thus involved in a major nucleotide repair system named guanine glycation repair (GG repair), dedicated to reversing methylglyoxal and glyoxal damage via nucleotide sanitization and direct nucleic acid repair. Plays an important role in protecting cells from carbonyl stress. This Staphylococcus aureus (strain MSSA476) protein is Protein/nucleic acid deglycase HchA.